A 352-amino-acid chain; its full sequence is Fructose-1,6-bisphosphatase class 1 (352 aa).

Mg(2+) is bound by residues Glu-111, Asp-133, Ile-135, and Asp-136. Residues 136–139 (DGSS), Asn-228, Tyr-256, and Lys-286 contribute to the substrate site. Glu-292 is a binding site for Mg(2+).

Belongs to the FBPase class 1 family. As to quaternary structure, homotetramer. Requires Mg(2+) as cofactor.

It is found in the cytoplasm. It catalyses the reaction beta-D-fructose 1,6-bisphosphate + H2O = beta-D-fructose 6-phosphate + phosphate. The protein operates within carbohydrate biosynthesis; Calvin cycle. This is Fructose-1,6-bisphosphatase class 1 from Crocosphaera subtropica (strain ATCC 51142 / BH68) (Cyanothece sp. (strain ATCC 51142)).